The chain runs to 311 residues: R2-like ligand binding oxidase (311 aa).

Positions 68, 101, and 104 each coordinate Mn(2+). Residues 71–162 (VTQDIQPFMA…AAQVRASVTY (92 aa)) constitute a cross-link (3-(O4'-tyrosyl)-valine (Val-Tyr)). Glutamate 101 contacts Fe cation. The Fe cation site is built by glutamate 167, glutamate 202, and histidine 205.

Belongs to the ribonucleoside diphosphate reductase small chain family. R2-like ligand binding oxidase subfamily. In terms of assembly, homodimer. Fe cation serves as cofactor. The cofactor is Mn(2+).

Its function is as follows. Probable oxidase that might be involved in lipid metabolism. The polypeptide is R2-like ligand binding oxidase (Mycobacterium avium (strain 104)).